A 94-amino-acid chain; its full sequence is Acylphosphatase (94 aa).

The region spanning 5–94 is the Acylphosphatase-like domain; the sequence is RLTAFVHGHV…PRDVEGFVER (90 aa). Catalysis depends on residues Arg20 and Asn38.

This sequence belongs to the acylphosphatase family.

The catalysed reaction is an acyl phosphate + H2O = a carboxylate + phosphate + H(+). The protein is Acylphosphatase (acyP) of Corynebacterium glutamicum (strain R).